A 137-amino-acid chain; its full sequence is UBAP1-MVB12-associated (UMA)-domain containing protein 1 (137 aa).

The interval 1-72 (MFHFFRKPPE…VSDPEMENKA (72 aa)) is disordered. Basic and acidic residues predominate over residues 32–44 (DEQRMTARGKTSD). Over residues 50–63 (PLETNKENSSSVTV) the composition is skewed to polar residues. Residues 86 to 134 (LSDVPFTLAPHVLAVQGTITDLPDHLLSYDGSENLSRFWYDFTLENSVL) enclose the UMA domain.

This Homo sapiens (Human) protein is UBAP1-MVB12-associated (UMA)-domain containing protein 1.